Reading from the N-terminus, the 235-residue chain is MPELRYCHGPYRGKECPVCGKPGKIMMNEAEINEVSRTLAAVLRHDPGRYGIRLDSHGYARISSLVSMFRKRKGMRWMTDDHLVYLAETDPRKRYQISGVLIRAVYGHTIDVDLTDLPTDGIPDTLYYQSSTAEAPLVKEAGIYPSDKSWIHLSGTYRKSFVSGLYHIDDPLVLAVNARSMIENGIDIFRSNDDIYLTKQVPPEYITIAEKEEVVLTDEEKDDIKRVREKNSGRD.

The protein belongs to the KptA/TPT1 family.

Removes the 2'-phosphate from RNA via an intermediate in which the phosphate is ADP-ribosylated by NAD followed by a presumed transesterification to release the RNA and generate ADP-ribose 1''-2''-cyclic phosphate (APPR&gt;P). May function as an ADP-ribosylase. In Thermoplasma volcanium (strain ATCC 51530 / DSM 4299 / JCM 9571 / NBRC 15438 / GSS1), this protein is Probable RNA 2'-phosphotransferase.